The sequence spans 373 residues: Queuine tRNA-ribosyltransferase (373 aa).

Asp89 functions as the Proton acceptor in the catalytic mechanism. Substrate is bound by residues Asp89–Phe93, Asp143, Gln185, and Gly212. The tract at residues Gly243 to Asp249 is RNA binding. The Nucleophile role is filled by Asp262. An RNA binding; important for wobble base 34 recognition region spans residues Thr267–Arg271. 4 residues coordinate Zn(2+): Cys300, Cys302, Cys305, and His331.

The protein belongs to the queuine tRNA-ribosyltransferase family. Homodimer. Within each dimer, one monomer is responsible for RNA recognition and catalysis, while the other monomer binds to the replacement base PreQ1. Zn(2+) serves as cofactor.

The enzyme catalyses 7-aminomethyl-7-carbaguanine + guanosine(34) in tRNA = 7-aminomethyl-7-carbaguanosine(34) in tRNA + guanine. It participates in tRNA modification; tRNA-queuosine biosynthesis. In terms of biological role, catalyzes the base-exchange of a guanine (G) residue with the queuine precursor 7-aminomethyl-7-deazaguanine (PreQ1) at position 34 (anticodon wobble position) in tRNAs with GU(N) anticodons (tRNA-Asp, -Asn, -His and -Tyr). Catalysis occurs through a double-displacement mechanism. The nucleophile active site attacks the C1' of nucleotide 34 to detach the guanine base from the RNA, forming a covalent enzyme-RNA intermediate. The proton acceptor active site deprotonates the incoming PreQ1, allowing a nucleophilic attack on the C1' of the ribose to form the product. After dissociation, two additional enzymatic reactions on the tRNA convert PreQ1 to queuine (Q), resulting in the hypermodified nucleoside queuosine (7-(((4,5-cis-dihydroxy-2-cyclopenten-1-yl)amino)methyl)-7-deazaguanosine). The polypeptide is Queuine tRNA-ribosyltransferase (Marinobacter nauticus (strain ATCC 700491 / DSM 11845 / VT8) (Marinobacter aquaeolei)).